Consider the following 497-residue polypeptide: Replication factor C large subunit (497 aa).

50-57 (GPAGVGKT) provides a ligand contact to ATP. Basic and acidic residues predominate over residues 428-455 (KRRSLGRDEGKAFFEKKPKKQTPDKKQM). Residues 428–497 (KRRSLGRDEG…AKPQKTLFDF (70 aa)) are disordered. Residues 456–465 (DLTQIINSTP) show a composition bias toward polar residues. Positions 466–476 (QEDKVEKKETE) are enriched in basic and acidic residues.

It belongs to the activator 1 small subunits family. RfcL subfamily. As to quaternary structure, heteromultimer composed of small subunits (RfcS) and large subunits (RfcL).

Part of the RFC clamp loader complex which loads the PCNA sliding clamp onto DNA. This chain is Replication factor C large subunit, found in Methanococcoides burtonii (strain DSM 6242 / NBRC 107633 / OCM 468 / ACE-M).